Consider the following 231-residue polypeptide: Isoprenyl transferase (231 aa).

Asp-14 is a catalytic residue. Asp-14 is a binding site for Mg(2+). Residues 15–18 (GNGR), Trp-19, Arg-27, His-31, and 59–61 (STE) contribute to the substrate site. Asn-62 serves as the catalytic Proton acceptor. Residues Trp-63, Arg-65, Arg-176, and 182-184 (RIS) contribute to the substrate site. Residue Glu-195 participates in Mg(2+) binding.

This sequence belongs to the UPP synthase family. Homodimer. Requires Mg(2+) as cofactor.

In terms of biological role, catalyzes the condensation of isopentenyl diphosphate (IPP) with allylic pyrophosphates generating different type of terpenoids. In Aquifex pyrophilus, this protein is Isoprenyl transferase.